The primary structure comprises 52 residues: ATP synthase protein 8 (52 aa).

A helical transmembrane segment spans residues Met-7–Phe-23.

It belongs to the ATPase protein 8 family. As to quaternary structure, F-type ATPases have 2 components, CF(1) - the catalytic core - and CF(0) - the membrane proton channel.

The protein localises to the mitochondrion membrane. In terms of biological role, mitochondrial membrane ATP synthase (F(1)F(0) ATP synthase or Complex V) produces ATP from ADP in the presence of a proton gradient across the membrane which is generated by electron transport complexes of the respiratory chain. F-type ATPases consist of two structural domains, F(1) - containing the extramembraneous catalytic core and F(0) - containing the membrane proton channel, linked together by a central stalk and a peripheral stalk. During catalysis, ATP synthesis in the catalytic domain of F(1) is coupled via a rotary mechanism of the central stalk subunits to proton translocation. Part of the complex F(0) domain. Minor subunit located with subunit a in the membrane. In Locusta migratoria (Migratory locust), this protein is ATP synthase protein 8 (MT-ATP8).